A 66-amino-acid chain; its full sequence is Period circadian protein (66 aa).

The tract at residues 1 to 66 (EGSGGSGSSG…VTLTESLLNK (66 aa)) is disordered. Positions 9 to 31 (SGNFTTGSNIHMSSVTNTSNAGT) are enriched in low complexity. Tandem repeats lie at residues 30-31 (GT), 32-33 (GT), 35-36 (GT), and 37-38 (GN). The tract at residues 30–53 (GTGTSGTGNSGGGSGGGTGPGSGA) is 4 X 2 AA tandem repeats of G-[TN]. The segment covering 32–51 (GTSGTGNSGGGSGGGTGPGS) has biased composition (gly residues).

In terms of assembly, forms a heterodimer with timeless (TIM); the complex then translocates into the nucleus. Post-translationally, phosphorylated with a circadian rhythmicity, probably by the double-time protein (dbt). Phosphorylation could be implicated in the stability of per monomer and in the formation of heterodimer per-tim.

Its subcellular location is the nucleus. The protein localises to the cytoplasm. It is found in the perinuclear region. Its function is as follows. Essential for biological clock functions. Determines the period length of circadian and ultradian rhythms; an increase in PER dosage leads to shortened circadian rhythms and a decrease leads to lengthened circadian rhythms. Essential for the circadian rhythmicity of locomotor activity, eclosion behavior, and for the rhythmic component of the male courtship song that originates in the thoracic nervous system. The biological cycle depends on the rhythmic formation and nuclear localization of the TIM-PER complex. Light induces the degradation of TIM, which promotes elimination of PER. Nuclear activity of the heterodimer coordinatively regulates PER and TIM transcription through a negative feedback loop. Behaves as a negative element in circadian transcriptional loop. Does not appear to bind DNA, suggesting indirect transcriptional inhibition. This Drosophila saltans (Fruit fly) protein is Period circadian protein (per).